The following is a 162-amino-acid chain: Beta-lactoglobulin-1 (162 aa).

2 disulfide bridges follow: Cys66-Cys160 and Cys106-Cys119.

The protein belongs to the calycin superfamily. Lipocalin family. In terms of assembly, monomer.

It localises to the secreted. Its function is as follows. Lactoglobulin is the primary component of whey, it binds retinol and is probably involved in the transport of that molecule. The polypeptide is Beta-lactoglobulin-1 (LGB1) (Felis catus (Cat)).